A 356-amino-acid chain; its full sequence is MKKKVLVGMSGGVDSSVAAYLLKEQGYEVIGVTMQIWQDDEEFIEKEGGCCSLSAVADARRVANKIGIPFYVMNFKDAFKRNVIDYFVDEYMEGRTPNPCIACNKFIKFSSFLDKAMAMGIDYVATGHYAIIEKHNDRYIIKKSEDDRKDQTYALYNLTQFQLERTLMPCGQYKKSKIREIAKEIGLRVHNKKDSEEICFIPDNDHGRYIKNRFPNKVREGNFVDKQGNILGTHKGIVYYTIGQRKGLGIAFGKPMYVVDINPFRNEVVLGDLEDLLNTELIAKDINYIPFDTLKDPMEVEAKIRYSQTPSKAIITPIEDGRVRVNFHEKQRAITKGQSVVFYKDDLLIGGGIIEK.

ATP-binding positions include 8–15 and M34; that span reads GMSGGVDS. The Nucleophile role is filled by C103. An intrachain disulfide couples C103 to C199. G127 contributes to the ATP binding site. Positions 149-151 are interaction with tRNA; the sequence is KDQ. The active-site Cysteine persulfide intermediate is C199. The interaction with tRNA stretch occupies residues 305–306; the sequence is RY.

The protein belongs to the MnmA/TRMU family.

The protein resides in the cytoplasm. The catalysed reaction is S-sulfanyl-L-cysteinyl-[protein] + uridine(34) in tRNA + AH2 + ATP = 2-thiouridine(34) in tRNA + L-cysteinyl-[protein] + A + AMP + diphosphate + H(+). Functionally, catalyzes the 2-thiolation of uridine at the wobble position (U34) of tRNA, leading to the formation of s(2)U34. The polypeptide is tRNA-specific 2-thiouridylase MnmA 2 (Clostridium botulinum (strain Okra / Type B1)).